A 209-amino-acid chain; its full sequence is Mitochondrial import inner membrane translocase subunit Tim23 (209 aa).

Helical transmembrane passes span Phe-73–Met-93, Ala-125–Ile-145, and Gly-181–Trp-197.

Belongs to the Tim17/Tim22/Tim23 family. Component of the TIM23 complex at least composed of TIMM23, TIMM17 (TIMM17A or TIMM17B) and TIMM50; within this complex, directly interacts with TIMM50. The complex interacts with the TIMM44 component of the PAM complex and with DNAJC15. Upon mitochondrial depolarization, interacts with PINK1; the interaction is required for PINK1 accumulation at the outer mitochondrial membrane, kinase activation by autophosphorylation and PRKN recruitement to mitochondria.

It localises to the mitochondrion inner membrane. Functionally, essential component of the TIM23 complex, a complex that mediates the translocation of transit peptide-containing proteins across the mitochondrial inner membrane. Has a role in the activation of stress-induced mitophagy by protecting PINK1 from OMA1-mediated degradation and facilitating its accumulation at the outer mitochondrial membrane in response to depolarization. The polypeptide is Mitochondrial import inner membrane translocase subunit Tim23 (TIMM23) (Homo sapiens (Human)).